The following is a 454-amino-acid chain: Response regulator PleD (454 aa).

Response regulatory domains follow at residues 4–120 and 155–269; these read RILV…RSLT and RVLI…KTQI. The Mg(2+) site is built by aspartate 9, aspartate 10, aspartate 53, and methionine 55. Aspartate 53 carries the post-translational modification 4-aspartylphosphate. One can recognise a GGDEF domain in the interval 319-454; sequence DPVSALLIDI…GRNAVVGKAA (136 aa). 2 residues coordinate substrate: asparagine 335 and aspartate 344. The Proton acceptor role is filled by glutamate 370.

Homodimer. Inactive monomer in solution. Phosphorylated by PleC and DivJ. Phosphorylation stimulates cyclase activity.

Its subcellular location is the cytoplasm. It catalyses the reaction 2 GTP = 3',3'-c-di-GMP + 2 diphosphate. It participates in purine metabolism; 3',5'-cyclic di-GMP biosynthesis. With respect to regulation, allosterically inhibited by the product c-di-GMP. Functionally, response regulator that is part of a signal transduction pathway controlling cell differentiation in the swarmer-to-stalked cell transition. Its function is as follows. Catalyzes the condensation of two GTP molecules to the cyclic dinucleotide di-GMP (c-di-GMP), which acts as a secondary messenger. In Caulobacter vibrioides (strain ATCC 19089 / CIP 103742 / CB 15) (Caulobacter crescentus), this protein is Response regulator PleD (pleD).